We begin with the raw amino-acid sequence, 470 residues long: Sugar transporter ERD6-like 8 (470 aa).

Positions 1 to 16 (METRKDDMEKRNDKSE) are enriched in basic and acidic residues. The tract at residues 1–24 (METRKDDMEKRNDKSEPLLLPENG) is disordered. 12 helical membrane-spanning segments follow: residues 33–53 (WMVY…GTCV), 73–93 (QFSV…ITSG), 110–130 (VISA…PLDF), 133–153 (FLTG…IAEI), 164–184 (TLNQ…GAVV), 188–208 (TLAL…WFIP), 270–290 (FVIV…NGVI), 307–327 (GSIL…TLLI), 335–355 (LLMA…NSFL), 373–393 (GVLV…WVIM), 409–429 (VTVV…FLMI), and 434–454 (GTFY…AKLV).

Belongs to the major facilitator superfamily. Sugar transporter (TC 2.A.1.1) family.

Its subcellular location is the membrane. Functionally, sugar transporter. The sequence is that of Sugar transporter ERD6-like 8 from Arabidopsis thaliana (Mouse-ear cress).